Consider the following 176-residue polypeptide: Small capsomere-interacting protein (176 aa).

2 disordered regions span residues 75–109 (DKRQRASVAGAGAHAHLGGSSATPVQQAQAAASAG) and 148–176 (ASAAAAVDTGSGGGGQPHDTAPRGARKKQ). The segment covering 80-109 (ASVAGAGAHAHLGGSSATPVQQAQAAASAG) has biased composition (low complexity).

The protein belongs to the herpesviridae small capsomere-interacting protein family. As to quaternary structure, interacts with the major capsid protein/MCP.

The protein localises to the virion. It is found in the host nucleus. Participates in the assembly of the infectious particles by decorating the outer surface of the capsid shell and thus forming a layer between the capsid and the tegument. Complexes composed of the major capsid protein and small capsomere-interacting protein/SCP assemble together in the host cytoplasm and are translocated to the nucleus, where they accumulate and participate in capsid assembly. This is Small capsomere-interacting protein from Epstein-Barr virus (strain B95-8) (HHV-4).